The following is a 396-amino-acid chain: Ribosomal RNA large subunit methyltransferase I (396 aa).

The PUA domain occupies 2–81 (SVRLVLAKGR…ESIDIAFFTR (80 aa)).

It belongs to the methyltransferase superfamily. RlmI family.

It localises to the cytoplasm. It carries out the reaction cytidine(1962) in 23S rRNA + S-adenosyl-L-methionine = 5-methylcytidine(1962) in 23S rRNA + S-adenosyl-L-homocysteine + H(+). Its function is as follows. Specifically methylates the cytosine at position 1962 (m5C1962) of 23S rRNA. This Escherichia coli (strain UTI89 / UPEC) protein is Ribosomal RNA large subunit methyltransferase I.